A 499-amino-acid polypeptide reads, in one-letter code: Glycerol kinase (499 aa).

Residue threonine 13 coordinates ADP. Positions 13, 14, and 15 each coordinate ATP. Residue threonine 13 coordinates sn-glycerol 3-phosphate. An ADP-binding site is contributed by arginine 17. Residues arginine 83, glutamate 84, tyrosine 135, and aspartate 245 each coordinate sn-glycerol 3-phosphate. Residues arginine 83, glutamate 84, tyrosine 135, aspartate 245, and glutamine 246 each contribute to the glycerol site. Residues threonine 267 and glycine 310 each coordinate ADP. Residues threonine 267, glycine 310, glutamine 314, and glycine 411 each contribute to the ATP site. ADP-binding residues include glycine 411 and asparagine 415.

Belongs to the FGGY kinase family.

It carries out the reaction glycerol + ATP = sn-glycerol 3-phosphate + ADP + H(+). It participates in polyol metabolism; glycerol degradation via glycerol kinase pathway; sn-glycerol 3-phosphate from glycerol: step 1/1. Inhibited by fructose 1,6-bisphosphate (FBP). Its function is as follows. Key enzyme in the regulation of glycerol uptake and metabolism. Catalyzes the phosphorylation of glycerol to yield sn-glycerol 3-phosphate. The chain is Glycerol kinase from Stenotrophomonas maltophilia (strain R551-3).